An 83-amino-acid chain; its full sequence is U-actitoxin-Aeq6a (83 aa).

The first 20 residues, 1 to 20 (MIYKAVFVCLVLVLLGDVFC), serve as a signal peptide directing secretion. Residues 21-36 (SPRNSGGGTLNDNPFE) constitute a propeptide that is removed on maturation. The residue at position 82 (proline 82) is a Proline amide.

In terms of processing, contains 3 disulfide bonds. Expressed by acrorhagi.

It localises to the secreted. It is found in the nematocyst. In terms of biological role, toxin. In Actinia equina (Beadlet anemone), this protein is U-actitoxin-Aeq6a.